Reading from the N-terminus, the 886-residue chain is Phycobiliprotein ApcE (886 aa).

(2R,3E)-phycocyanobilin is bound at residue C187. 3 consecutive PBS-linker domains span residues D244 to V424, Q496 to K678, and N695 to V876.

Belongs to the phycobilisome linker protein family. In terms of processing, contains one covalently linked bilin chromophore. This protein autochromophorylates (Potential).

The protein resides in the plastid. It localises to the chloroplast thylakoid membrane. Its function is as follows. This protein is postulated to act both as terminal energy acceptor and as a linker polypeptide that stabilizes the phycobilisome architecture. May have intrinsic bilin lyase activity. The sequence is that of Phycobiliprotein ApcE (apcE) from Porphyra purpurea (Red seaweed).